The following is an 813-amino-acid chain: Sodium/hydrogen exchanger 2 (813 aa).

7 helical membrane passes run 108–128 (IVPE…IIFG), 139–159 (TDVF…YFMP), 170–190 (IFWY…LSLF), 210–230 (LFGS…FENI), 238–258 (ILVF…YNLF), 279–299 (FFVV…IAAF), and 309–329 (VIEP…AEMF). A glycan (N-linked (GlcNAc...) asparagine) is linked at N351. 4 helical membrane passes run 362 to 382 (YFMK…MGVS), 393 to 413 (AFVC…VFVL), 431 to 451 (FIIA…FLLP), and 460 to 480 (LFIT…GITI). Positions 649–661 (LRKDNSLNRERRA) are enriched in basic and acidic residues. Disordered stretches follow at residues 649-709 (LRKD…NLQP) and 736-813 (DVGS…NEKP). A compositionally biased stretch (polar residues) spans 687 to 696 (VSNADGNSSD). Basic and acidic residues-rich tracts occupy residues 770 to 781 (KDQRFGRGREDS) and 797 to 813 (RASE…NEKP).

The protein belongs to the monovalent cation:proton antiporter 1 (CPA1) transporter (TC 2.A.36) family. In terms of assembly, interacts with CHP1 and CHP2. As to expression, predominantly in small intestine, colon, and stomach, with much lower levels in skeletal muscle, kidney, brain, testis, uterus, heart and lung.

Its subcellular location is the apical cell membrane. It carries out the reaction Na(+)(in) + H(+)(out) = Na(+)(out) + H(+)(in). With respect to regulation, li(+) activates Na(+)/H(+) exchanger. Functionally, plasma membrane Na(+)/H(+) antiporter. Mediates the electroneutral exchange of intracellular H(+) ions for extracellular Na(+). Major apical Na(+)/H(+) exchanger in the base of the colonic crypt. Controls in the colonic crypt intracellular pH (pHi) to direct colonic epithelial cell differentiation into the absorptive enterocyte lineage at the expense of the secretory lineage. This chain is Sodium/hydrogen exchanger 2 (Slc9a2), found in Rattus norvegicus (Rat).